Consider the following 223-residue polypeptide: Superoxide dismutase [Mn], mitochondrial (223 aa).

The transit peptide at 1 to 24 directs the protein to the mitochondrion; sequence MNLIIGVAGRLLVGKNYCLNTQRL. Residues H50, H98, D184, and H188 each contribute to the Mn(2+) site.

It belongs to the iron/manganese superoxide dismutase family. Homotetramer. Requires Mn(2+) as cofactor.

It localises to the mitochondrion matrix. It carries out the reaction 2 superoxide + 2 H(+) = H2O2 + O2. Functionally, destroys superoxide anion radicals which are normally produced within the cells and which are toxic to biological systems. This chain is Superoxide dismutase [Mn], mitochondrial (sod-2), found in Onchocerca volvulus.